Consider the following 394-residue polypeptide: 8-amino-7-oxononanoate synthase (394 aa).

Residue arginine 21 participates in substrate binding. Pyridoxal 5'-phosphate is bound at residue 112 to 113; it reads GY. Histidine 137 serves as a coordination point for substrate. Serine 183, histidine 211, and threonine 239 together coordinate pyridoxal 5'-phosphate. At lysine 242 the chain carries N6-(pyridoxal phosphate)lysine. Threonine 358 serves as a coordination point for substrate.

The protein belongs to the class-II pyridoxal-phosphate-dependent aminotransferase family. BioF subfamily. As to quaternary structure, homodimer. Requires pyridoxal 5'-phosphate as cofactor.

It carries out the reaction 6-carboxyhexanoyl-[ACP] + L-alanine + H(+) = (8S)-8-amino-7-oxononanoate + holo-[ACP] + CO2. Its pathway is cofactor biosynthesis; biotin biosynthesis. In terms of biological role, catalyzes the decarboxylative condensation of pimeloyl-[acyl-carrier protein] and L-alanine to produce 8-amino-7-oxononanoate (AON), [acyl-carrier protein], and carbon dioxide. The protein is 8-amino-7-oxononanoate synthase of Burkholderia thailandensis (strain ATCC 700388 / DSM 13276 / CCUG 48851 / CIP 106301 / E264).